An 89-amino-acid chain; its full sequence is DNA/RNA-binding protein Alba (89 aa).

Residue Lys-11 is modified to N6-acetyllysine.

The protein belongs to the histone-like Alba family. Post-translationally, acetylated. Acetylation at Lys-11 decreases DNA-binding affinity.

It localises to the cytoplasm. The protein localises to the chromosome. Functionally, binds double-stranded DNA tightly but without sequence specificity. Involved in DNA compaction. This Thermoplasma volcanium (strain ATCC 51530 / DSM 4299 / JCM 9571 / NBRC 15438 / GSS1) protein is DNA/RNA-binding protein Alba.